The chain runs to 286 residues: NAD kinase (286 aa).

The active-site Proton acceptor is the Asp-74. NAD(+) is bound by residues Asp-74–Gly-75, Asn-148–Asp-149, Asp-178, Ala-186, Thr-189–Ser-194, and Gln-244.

It belongs to the NAD kinase family. A divalent metal cation serves as cofactor.

It localises to the cytoplasm. The enzyme catalyses NAD(+) + ATP = ADP + NADP(+) + H(+). Functionally, involved in the regulation of the intracellular balance of NAD and NADP, and is a key enzyme in the biosynthesis of NADP. Catalyzes specifically the phosphorylation on 2'-hydroxyl of the adenosine moiety of NAD to yield NADP. The polypeptide is NAD kinase (Campylobacter jejuni (strain RM1221)).